Consider the following 417-residue polypeptide: Serine hydroxymethyltransferase 2 (417 aa).

(6S)-5,6,7,8-tetrahydrofolate contacts are provided by residues leucine 121 and 125–127 (GHL). At lysine 230 the chain carries N6-(pyridoxal phosphate)lysine. Residue 355-357 (SPF) coordinates (6S)-5,6,7,8-tetrahydrofolate.

It belongs to the SHMT family. Homodimer. The cofactor is pyridoxal 5'-phosphate.

The protein localises to the cytoplasm. It catalyses the reaction (6R)-5,10-methylene-5,6,7,8-tetrahydrofolate + glycine + H2O = (6S)-5,6,7,8-tetrahydrofolate + L-serine. The protein operates within one-carbon metabolism; tetrahydrofolate interconversion. It functions in the pathway amino-acid biosynthesis; glycine biosynthesis; glycine from L-serine: step 1/1. In terms of biological role, catalyzes the reversible interconversion of serine and glycine with tetrahydrofolate (THF) serving as the one-carbon carrier. This reaction serves as the major source of one-carbon groups required for the biosynthesis of purines, thymidylate, methionine, and other important biomolecules. Also exhibits THF-independent aldolase activity toward beta-hydroxyamino acids, producing glycine and aldehydes, via a retro-aldol mechanism. The sequence is that of Serine hydroxymethyltransferase 2 from Colwellia psychrerythraea (strain 34H / ATCC BAA-681) (Vibrio psychroerythus).